Consider the following 488-residue polypeptide: Bifunctional protein HldE (488 aa).

Residues 1-330 (MDRKSIESIF…NAVALAHSDS (330 aa)) are ribokinase. 205–208 (NRRE) is a binding site for ATP. Aspartate 275 is an active-site residue. The tract at residues 356-488 (FTNGCFDLLH…IIERVLERYS (133 aa)) is cytidylyltransferase.

The protein in the N-terminal section; belongs to the carbohydrate kinase PfkB family. It in the C-terminal section; belongs to the cytidylyltransferase family. Homodimer.

It catalyses the reaction D-glycero-beta-D-manno-heptose 7-phosphate + ATP = D-glycero-beta-D-manno-heptose 1,7-bisphosphate + ADP + H(+). The catalysed reaction is D-glycero-beta-D-manno-heptose 1-phosphate + ATP + H(+) = ADP-D-glycero-beta-D-manno-heptose + diphosphate. It participates in nucleotide-sugar biosynthesis; ADP-L-glycero-beta-D-manno-heptose biosynthesis; ADP-L-glycero-beta-D-manno-heptose from D-glycero-beta-D-manno-heptose 7-phosphate: step 1/4. The protein operates within nucleotide-sugar biosynthesis; ADP-L-glycero-beta-D-manno-heptose biosynthesis; ADP-L-glycero-beta-D-manno-heptose from D-glycero-beta-D-manno-heptose 7-phosphate: step 3/4. Functionally, catalyzes the phosphorylation of D-glycero-D-manno-heptose 7-phosphate at the C-1 position to selectively form D-glycero-beta-D-manno-heptose-1,7-bisphosphate. In terms of biological role, catalyzes the ADP transfer from ATP to D-glycero-beta-D-manno-heptose 1-phosphate, yielding ADP-D-glycero-beta-D-manno-heptose. This Pelobacter propionicus (strain DSM 2379 / NBRC 103807 / OttBd1) protein is Bifunctional protein HldE.